The primary structure comprises 476 residues: MMAKWMSVAQVKDKIKESSAEEVTAGYLEVIEKSKINGYITVSDKALEQAKKIDVEGHEGPLAGVPIAIKDNISVVGLPNSCGSKILEGYVPPFNAHVIEKLLDAGAVILGKTNLDEFAMGSSTETSYYGPTANPWDLERVPGGSSGGSAAVVAAGEAPFALGSDTGGSVRCPAAFCGVVGLKPTYGAVSRYGVVAYANSLEQVGPLANNVEDIAILMDVIAGYDRRDSTSIDSKTEYQKALVDDVKGLKIGVPKEFFGEGIHPGVEKAVWNAIHKFESLGATRQEVSMPNINYALASYYIIAMSEASSNLARFDGTRYGFRANGENWHAMVSKTRAEGFGTEVKRRILLGTYALSAGYHDKYYLKALKVRTLVKQDFDKALSTVDLLMAPTMPNPAFRIGEKIEDPLTLYLSDVNTCPINLAGVPSVSVPCGFTDGLPVGLQIMGKPFDEPTVLRAAYTFEKNTDYHTKRPPEVA.

Active-site charge relay system residues include lysine 70 and serine 145. The active-site Acyl-ester intermediate is serine 169.

Belongs to the amidase family. GatA subfamily. As to quaternary structure, heterotrimer of A, B and C subunits.

The catalysed reaction is L-glutamyl-tRNA(Gln) + L-glutamine + ATP + H2O = L-glutaminyl-tRNA(Gln) + L-glutamate + ADP + phosphate + H(+). Functionally, allows the formation of correctly charged Gln-tRNA(Gln) through the transamidation of misacylated Glu-tRNA(Gln) in organisms which lack glutaminyl-tRNA synthetase. The reaction takes place in the presence of glutamine and ATP through an activated gamma-phospho-Glu-tRNA(Gln). The chain is Glutamyl-tRNA(Gln) amidotransferase subunit A from Methanosarcina acetivorans (strain ATCC 35395 / DSM 2834 / JCM 12185 / C2A).